A 305-amino-acid chain; its full sequence is Methionyl-tRNA formyltransferase (305 aa).

111-114 (SLLP) provides a ligand contact to (6S)-5,6,7,8-tetrahydrofolate.

The protein belongs to the Fmt family.

The enzyme catalyses L-methionyl-tRNA(fMet) + (6R)-10-formyltetrahydrofolate = N-formyl-L-methionyl-tRNA(fMet) + (6S)-5,6,7,8-tetrahydrofolate + H(+). Its function is as follows. Attaches a formyl group to the free amino group of methionyl-tRNA(fMet). The formyl group appears to play a dual role in the initiator identity of N-formylmethionyl-tRNA by promoting its recognition by IF2 and preventing the misappropriation of this tRNA by the elongation apparatus. This Helicobacter pylori (strain J99 / ATCC 700824) (Campylobacter pylori J99) protein is Methionyl-tRNA formyltransferase.